The primary structure comprises 708 residues: Assimilatory nitrate reductase (708 aa).

Positions 15–73 (TKQVPTTCMRCAVGCGHVHLGSENAYGLETVRGDPSHPVNNGLACGRGIRESADPAGEW) constitute a 4Fe-4S Mo/W bis-MGD-type domain. Positions 22, 25, 29, and 59 each coordinate [4Fe-4S] cluster. Residues 586-613 (TTGREADGYNTGVRSRSDTPEEPVARVN) are disordered.

The protein belongs to the prokaryotic molybdopterin-containing oxidoreductase family. NasA/NapA/NarB subfamily. Is probably a monomer. Initially characterized as a dimer of proteins with a MW of 105 and 50 kDa. The cofactor is [4Fe-4S] cluster. It depends on Mo-bis(molybdopterin guanine dinucleotide) as a cofactor.

The protein localises to the cytoplasm. It catalyses the reaction nitrite + 2 oxidized [2Fe-2S]-[ferredoxin] + H2O = nitrate + 2 reduced [2Fe-2S]-[ferredoxin] + 2 H(+). Its pathway is nitrogen metabolism; nitrate reduction (assimilation). With respect to regulation, inhibited by cyanide and azide. Functionally, nitrate reductase is a key enzyme involved in the first step of nitrate assimilation. Catalyzes the reduction of nitrate to nitrite, using ferredoxin as the electron donor. Can use reduced methyl viologen but neither NADPH nor NADH as electron donors. The polypeptide is Assimilatory nitrate reductase (Haloferax mediterranei (strain ATCC 33500 / DSM 1411 / JCM 8866 / NBRC 14739 / NCIMB 2177 / R-4) (Halobacterium mediterranei)).